Here is a 493-residue protein sequence, read N- to C-terminus: UDP-N-acetylmuramate--L-alanine ligase (493 aa).

Residue 112–118 (GTHGKTT) participates in ATP binding.

The protein belongs to the MurCDEF family.

Its subcellular location is the cytoplasm. The catalysed reaction is UDP-N-acetyl-alpha-D-muramate + L-alanine + ATP = UDP-N-acetyl-alpha-D-muramoyl-L-alanine + ADP + phosphate + H(+). The protein operates within cell wall biogenesis; peptidoglycan biosynthesis. Functionally, cell wall formation. The polypeptide is UDP-N-acetylmuramate--L-alanine ligase (Nitrosospira multiformis (strain ATCC 25196 / NCIMB 11849 / C 71)).